Here is a 239-residue protein sequence, read N- to C-terminus: Purine nucleoside phosphorylase DeoD-type (239 aa).

Histidine 5 lines the a purine D-ribonucleoside pocket. Phosphate-binding positions include glycine 21, arginine 25, arginine 44, and 88–91 (RIGS). Residues 180–182 (EME) and 204–205 (TD) each bind a purine D-ribonucleoside. Aspartate 205 (proton donor) is an active-site residue.

It belongs to the PNP/UDP phosphorylase family. In terms of assembly, homohexamer; trimer of homodimers.

It catalyses the reaction a purine D-ribonucleoside + phosphate = a purine nucleobase + alpha-D-ribose 1-phosphate. The catalysed reaction is a purine 2'-deoxy-D-ribonucleoside + phosphate = a purine nucleobase + 2-deoxy-alpha-D-ribose 1-phosphate. Functionally, catalyzes the reversible phosphorolytic breakdown of the N-glycosidic bond in the beta-(deoxy)ribonucleoside molecules, with the formation of the corresponding free purine bases and pentose-1-phosphate. The sequence is that of Purine nucleoside phosphorylase DeoD-type from Aliivibrio fischeri (strain ATCC 700601 / ES114) (Vibrio fischeri).